The chain runs to 473 residues: 1-aminocyclopropane-1-carboxylate synthase (473 aa).

Residues 84-85 (DY), Tyr-145, and Asp-151 contribute to the substrate site. Lys-273 is modified (N6-(pyridoxal phosphate)lysine).

This sequence belongs to the class-I pyridoxal-phosphate-dependent aminotransferase family. As to quaternary structure, homodimer. Requires pyridoxal 5'-phosphate as cofactor.

The catalysed reaction is S-adenosyl-L-methionine = 1-aminocyclopropane-1-carboxylate + S-methyl-5'-thioadenosine + H(+). The enzyme catalyses (2S)-2-amino-3-butenoate + H2O = 2-oxobutanoate + NH4(+). The protein operates within alkene biosynthesis; ethylene biosynthesis via S-adenosyl-L-methionine; ethylene from S-adenosyl-L-methionine: step 1/2. Inhibited by L-aminoethoxyvinylglycine (AVG). Inhibited by L-vinylglycine (L-VG). Inhibited by S-methylmethionine through a L-VG ketimine intermediate. In terms of biological role, catalyzes the formation of 1-aminocyclopropane-1-carboxylate, a direct precursor of ethylene in higher plants. Also catalyzes the conversion of L-vinylglycine (L-VG) to alpha-ketobutyrate and ammonia. Can use S-methylmethionine as substrate. This is 1-aminocyclopropane-1-carboxylate synthase from Malus domestica (Apple).